The following is a 251-amino-acid chain: Pyridoxine 5'-phosphate synthase (251 aa).

Residues Asn8 and Arg19 each contribute to the 3-amino-2-oxopropyl phosphate site. His44 acts as the Proton acceptor in catalysis. Residues Arg46 and His51 each coordinate 1-deoxy-D-xylulose 5-phosphate. Residue Glu76 is the Proton acceptor of the active site. Thr106 provides a ligand contact to 1-deoxy-D-xylulose 5-phosphate. The Proton donor role is filled by His200. 3-amino-2-oxopropyl phosphate-binding positions include Asp201 and 223 to 224 (GH).

The protein belongs to the PNP synthase family. Homooctamer; tetramer of dimers.

The protein resides in the cytoplasm. The enzyme catalyses 3-amino-2-oxopropyl phosphate + 1-deoxy-D-xylulose 5-phosphate = pyridoxine 5'-phosphate + phosphate + 2 H2O + H(+). The protein operates within cofactor biosynthesis; pyridoxine 5'-phosphate biosynthesis; pyridoxine 5'-phosphate from D-erythrose 4-phosphate: step 5/5. Functionally, catalyzes the complicated ring closure reaction between the two acyclic compounds 1-deoxy-D-xylulose-5-phosphate (DXP) and 3-amino-2-oxopropyl phosphate (1-amino-acetone-3-phosphate or AAP) to form pyridoxine 5'-phosphate (PNP) and inorganic phosphate. This Agrobacterium fabrum (strain C58 / ATCC 33970) (Agrobacterium tumefaciens (strain C58)) protein is Pyridoxine 5'-phosphate synthase.